Here is a 1412-residue protein sequence, read N- to C-terminus: DNA-directed RNA polymerase subunit beta' (1412 aa).

The Zn(2+) site is built by C70, C72, C85, and C88. Mg(2+)-binding residues include D460, D462, and D464. Residues C819, C893, C900, and C903 each contribute to the Zn(2+) site. Residues 1392–1412 (EEAFEFGTPSTPAEEPQHPAE) are disordered.

It belongs to the RNA polymerase beta' chain family. The RNAP catalytic core consists of 2 alpha, 1 beta, 1 beta' and 1 omega subunit. When a sigma factor is associated with the core the holoenzyme is formed, which can initiate transcription. The cofactor is Mg(2+). Requires Zn(2+) as cofactor.

The enzyme catalyses RNA(n) + a ribonucleoside 5'-triphosphate = RNA(n+1) + diphosphate. In terms of biological role, DNA-dependent RNA polymerase catalyzes the transcription of DNA into RNA using the four ribonucleoside triphosphates as substrates. This Burkholderia thailandensis (strain ATCC 700388 / DSM 13276 / CCUG 48851 / CIP 106301 / E264) protein is DNA-directed RNA polymerase subunit beta'.